The chain runs to 334 residues: MKKNQFLKESDVTAESVFFMKRRQVLKALGISAAALSLPHAAHADLLSWFKGNDRPPAPAGKPLEFSKPTAWQNNLPLTPVDKVSGYNNFYEFGLDKADPAANAGSLKTDPWTLKISGEVAKPLTLDHDDLTRRFPLEERIYRMRCVEAWSMVVPWIGFPLHKLLALAEPTSNAKYVAFETIYAPEQMPGQQDRFIGGGLKYPYVEGLRLDEAMHPLTLMTVGVYGKALPPQNGAPVRLIVPWKYGFKGIKSIVSIKLTRERPPTTWNLAAPDEYGFYANVNPHVDHPRWSQATERFIGSGGILDVQRQPTLLFNGYADQVASLYRGLDLRENF.

A signal peptide (tat-type signal) is located at residues 1–44 (MKKNQFLKESDVTAESVFFMKRRQVLKALGISAAALSLPHAAHA). Residues N88, 91–92 (YE), C146, T181, N233, R238, and 249–251 (GIK) each bind Mo-molybdopterin.

The protein belongs to the MsrP family. As to quaternary structure, heterodimer of a catalytic subunit (MsrP) and a heme-binding subunit (MsrQ). Mo-molybdopterin serves as cofactor. Predicted to be exported by the Tat system. The position of the signal peptide cleavage has not been experimentally proven.

It is found in the periplasm. It catalyses the reaction L-methionyl-[protein] + a quinone + H2O = L-methionyl-(S)-S-oxide-[protein] + a quinol. The enzyme catalyses L-methionyl-[protein] + a quinone + H2O = L-methionyl-(R)-S-oxide-[protein] + a quinol. In terms of biological role, part of the MsrPQ system that repairs oxidized periplasmic proteins containing methionine sulfoxide residues (Met-O), using respiratory chain electrons. Thus protects these proteins from oxidative-stress damage caused by reactive species of oxygen and chlorine generated by the host defense mechanisms. MsrPQ is essential for the maintenance of envelope integrity under bleach stress, rescuing a wide series of structurally unrelated periplasmic proteins from methionine oxidation, including the primary periplasmic chaperone SurA and the lipoprotein Pal. The catalytic subunit MsrP is non-stereospecific, being able to reduce both (R-) and (S-) diastereoisomers of methionine sulfoxide. In Shigella sonnei (strain Ss046), this protein is Protein-methionine-sulfoxide reductase catalytic subunit MsrP.